The chain runs to 394 residues: Phosphoglycerate kinase (394 aa).

Residues 21 to 23, Arg-36, 59 to 62, Arg-118, and Arg-151 each bind substrate; these read DFN and HLGR. A Phosphoserine modification is found at Ser-183. Position 201 (Lys-201) interacts with ATP. At Thr-299 the chain carries Phosphothreonine. ATP-binding positions include Glu-323 and 350 to 353; that span reads GGDS.

This sequence belongs to the phosphoglycerate kinase family. Monomer.

Its subcellular location is the cytoplasm. It catalyses the reaction (2R)-3-phosphoglycerate + ATP = (2R)-3-phospho-glyceroyl phosphate + ADP. The protein operates within carbohydrate degradation; glycolysis; pyruvate from D-glyceraldehyde 3-phosphate: step 2/5. In Geobacillus sp. (strain WCH70), this protein is Phosphoglycerate kinase.